The chain runs to 641 residues: Chaperone protein DnaK (641 aa).

At Thr200 the chain carries Phosphothreonine; by autocatalysis. Residues 602–611 (AASSKASAAS) show a composition bias toward low complexity. Residues 602–641 (AASSKASAASSPPPPPGAGGQKSDVIDAEFEKVDKDKPQA) form a disordered region. The segment covering 630 to 641 (EFEKVDKDKPQA) has biased composition (basic and acidic residues).

It belongs to the heat shock protein 70 family.

In terms of biological role, acts as a chaperone. The polypeptide is Chaperone protein DnaK (Methylacidiphilum infernorum (isolate V4) (Methylokorus infernorum (strain V4))).